Reading from the N-terminus, the 280-residue chain is AGNRRPIWIMGHMVNAIGQIDEFVNLGANSIETDVSFDDNANPEYTYHGIPCDSGRNCKKYENFNDFLKGLRSATTPGNSKYQEKLVLVVFDLKTGSLYDNQANDAGKKWAKNLLQHYWNNGNNGGRAYIVLSIPDLNHYPLIKGFKDQLTKDGHPELMDKVGHDFSGNDDISDVGKAYKKAGITGHIWQSDGITNSLPRGLSRVNAAVANRDSANGFINKVYYWTVDKRSTTRDALDAGVDGIMTNYPDVITDVLNEAAYKKKFRVATYDDNPWVTFNK.

Residue H12 is part of the active site. The Mg(2+) site is built by E32 and D34. The active-site Nucleophile is H48. A disulfide bond links C52 and C58. D92 serves as a coordination point for Mg(2+).

It belongs to the arthropod phospholipase D family. Class I subfamily. The cofactor is Mg(2+). In terms of tissue distribution, expressed by the venom gland.

The protein localises to the secreted. It catalyses the reaction an N-(acyl)-sphingosylphosphocholine = an N-(acyl)-sphingosyl-1,3-cyclic phosphate + choline. The catalysed reaction is an N-(acyl)-sphingosylphosphoethanolamine = an N-(acyl)-sphingosyl-1,3-cyclic phosphate + ethanolamine. It carries out the reaction a 1-acyl-sn-glycero-3-phosphocholine = a 1-acyl-sn-glycero-2,3-cyclic phosphate + choline. The enzyme catalyses a 1-acyl-sn-glycero-3-phosphoethanolamine = a 1-acyl-sn-glycero-2,3-cyclic phosphate + ethanolamine. Its function is as follows. Dermonecrotic toxins cleave the phosphodiester linkage between the phosphate and headgroup of certain phospholipids (sphingolipid and lysolipid substrates), forming an alcohol (often choline) and a cyclic phosphate. This toxin acts on sphingomyelin (SM). It may also act on ceramide phosphoethanolamine (CPE), lysophosphatidylcholine (LPC) and lysophosphatidylethanolamine (LPE), but not on lysophosphatidylserine (LPS), and lysophosphatidylglycerol (LPG). It acts by transphosphatidylation, releasing exclusively cyclic phosphate products as second products. Induces dermonecrosis, hemolysis, increased vascular permeability, edema, inflammatory response, and platelet aggregation. The polypeptide is Dermonecrotic toxin LgSicTox-alphaIA1 (Loxosceles gaucho (Spider)).